The chain runs to 187 residues: Virulence protein ATR13 (187 aa).

A signal peptide spans 1-19; it reads MRLVHAVLLPGIIVFVSNG. Positions 38–41 match the RxLR motif; sequence RQLR. The leucine heptad repeat region stretch occupies residues 50 to 92; it reads LSRASFGLGKAQDPLDKFFRKIINSRKPIETSYSAKGIHEKII. Tandem repeats lie at residues 93–103, 104–114, 115–125, and 126–136. A 4 X 11 AA tandem repeats region spans residues 93 to 136; it reads KAYDRHVFESKKAHDRHVSKSKKAHGRHVSKSKMAHDRHVSKSE. Residues 104 to 136 are disordered; sequence KAHDRHVSKSKKAHGRHVSKSKMAHDRHVSKSE. Residues 111–125 show a composition bias toward basic residues; the sequence is SKSKKAHGRHVSKSK. Basic and acidic residues predominate over residues 126–136; it reads MAHDRHVSKSE. The highly variable C-terminus domain stretch occupies residues 137 to 187; the sequence is KAPIQYASVADYLKKIYPGTDIERIVSTLKRHDEVGAKDLGAKLQTAVASQ.

This sequence belongs to the RxLR effector family.

The protein resides in the secreted. It localises to the host nucleus. Its subcellular location is the host nucleolus. It is found in the host cytoplasm. Secreted effector that acts as an elicitor of hypersensitive response (HR) specifically on plants carrying defense protein RPP13. Recognition of ATR13 by RPP13 initiates defense responses that are effective against oomycete, bacterial and viral pathogens. Due to high polymorphism, ATR13-Emoy2 does not recognize RPP13-Nd, the RPP13 defense protein from Arabidopsis thaliana ecotype Niederzenz. ATR13-Emoy2 is recognized by RPP13 variants RPP13-UKID44, RPP13-UKID65 and RPP13-UKID71. The chain is Virulence protein ATR13 from Hyaloperonospora arabidopsidis (strain Emoy2) (Downy mildew agent).